The primary structure comprises 295 residues: Bifunctional protein FolD (295 aa).

NADP(+) contacts are provided by residues 166-168, threonine 195, and valine 236; that span reads GRS.

It belongs to the tetrahydrofolate dehydrogenase/cyclohydrolase family. As to quaternary structure, homodimer.

The catalysed reaction is (6R)-5,10-methylene-5,6,7,8-tetrahydrofolate + NADP(+) = (6R)-5,10-methenyltetrahydrofolate + NADPH. It carries out the reaction (6R)-5,10-methenyltetrahydrofolate + H2O = (6R)-10-formyltetrahydrofolate + H(+). It functions in the pathway one-carbon metabolism; tetrahydrofolate interconversion. In terms of biological role, catalyzes the oxidation of 5,10-methylenetetrahydrofolate to 5,10-methenyltetrahydrofolate and then the hydrolysis of 5,10-methenyltetrahydrofolate to 10-formyltetrahydrofolate. The sequence is that of Bifunctional protein FolD from Syntrophobacter fumaroxidans (strain DSM 10017 / MPOB).